Reading from the N-terminus, the 105-residue chain is MADWNGEYISPYAEHGKKSEQVKKITVSIPIKVLEILTNERTRRQIRNLRHATNSELLCEAFLHAFTGQPLPTDDDLMKERSNEIPEEAKLKMRELGIDPDKWQY.

The protein belongs to the MetJ family. Homodimer.

It localises to the cytoplasm. Its function is as follows. This regulatory protein, when combined with SAM (S-adenosylmethionine) represses the expression of the methionine regulon and of enzymes involved in SAM synthesis. This Glaesserella parasuis serovar 5 (strain SH0165) (Haemophilus parasuis) protein is Met repressor.